The sequence spans 740 residues: D-ornithine 4,5-aminomutase subunit beta (740 aa).

Residues E81, Y160, H182, and 294-296 (RAQ) each bind substrate. One can recognise a B12-binding domain in the interval 602 to 739 (PLKIVAATVG…VKKRREMREG (138 aa)). Adenosylcob(III)alamin-binding positions include 614–616 (EHS) and H615. K626 bears the N6-(pyridoxal phosphate)lysine mark. Adenosylcob(III)alamin is bound by residues 664 to 669 (STIISH), T700, and S720.

In terms of assembly, heterotetramer of 2 alpha (OraS) and 2 beta (OraE) subunits. Adenosylcob(III)alamin serves as cofactor. Requires pyridoxal 5'-phosphate as cofactor.

The enzyme catalyses D-ornithine = (2R,4S)-2,4-diaminopentanoate. With respect to regulation, increased activity in the presence of dithiothreitol (DTT) in vitro. Inhibited by 1 mM potassium phosphate and potassium chloride. Inhibited by L-alpha-ornithine, D,L-alpha-lysine, L-beta-lysine (50%-60%), L-alpha-lysine (26%) and by delta-amino-n-valeric acid to a lesser extent. Significant decrease in activity is observed in the presence of 0.2 mM p-chloromercuribenzoate, N-ethylmaleimide and also by 2 mM iodoacetate to a lesser extent but not inhibited by arsenite. Functionally, component of a complex that catalyzes the reversible migration of the omega amino group of D-ornithine to C-4 to form (2R,4S)-2,4-diaminopentanoic acid. OraE may be the catalytic subunit. Active only on D-ornithine and 2,4-diaminopentanoic acid but not active on L-ornithine, L-beta-lysine, L-alpha-lysine or D-alpha-lysine. The polypeptide is D-ornithine 4,5-aminomutase subunit beta (oraE) (Acetoanaerobium sticklandii (strain ATCC 12662 / DSM 519 / JCM 1433 / CCUG 9281 / NCIMB 10654 / HF) (Clostridium sticklandii)).